A 185-amino-acid chain; its full sequence is Large ribosomal subunit protein uL10 (185 aa).

Residues 165–185 (LRAKKEEQGGAGTPAPAEAAE) are disordered.

This sequence belongs to the universal ribosomal protein uL10 family. In terms of assembly, part of the ribosomal stalk of the 50S ribosomal subunit. The N-terminus interacts with L11 and the large rRNA to form the base of the stalk. The C-terminus forms an elongated spine to which L12 dimers bind in a sequential fashion forming a multimeric L10(L12)X complex.

In terms of biological role, forms part of the ribosomal stalk, playing a central role in the interaction of the ribosome with GTP-bound translation factors. This chain is Large ribosomal subunit protein uL10, found in Streptomyces griseus subsp. griseus (strain JCM 4626 / CBS 651.72 / NBRC 13350 / KCC S-0626 / ISP 5235).